The sequence spans 694 residues: Elongation factor G (694 aa).

The region spanning 9 to 288 (SKIRNIGIMA…VIVKWLPSPK (280 aa)) is the tr-type G domain. Residues 18–25 (AHIDAGKT), 82–86 (DTPGH), and 136–139 (NKMD) each bind GTP.

This sequence belongs to the TRAFAC class translation factor GTPase superfamily. Classic translation factor GTPase family. EF-G/EF-2 subfamily.

The protein localises to the cytoplasm. In terms of biological role, catalyzes the GTP-dependent ribosomal translocation step during translation elongation. During this step, the ribosome changes from the pre-translocational (PRE) to the post-translocational (POST) state as the newly formed A-site-bound peptidyl-tRNA and P-site-bound deacylated tRNA move to the P and E sites, respectively. Catalyzes the coordinated movement of the two tRNA molecules, the mRNA and conformational changes in the ribosome. This chain is Elongation factor G, found in Chlamydia felis (strain Fe/C-56) (Chlamydophila felis).